The chain runs to 85 residues: Major outer membrane protein 1 (85 aa).

Positions 1-18 (MEAREVEEMRRSRLLTLG) are cleaved as a signal peptide. A helical transmembrane segment spans residues 22–42 (YTAVIALAALVLVMGALGLVL).

As to quaternary structure, forms extremely stable complexes with apparent masses of 150, 50, 45 and 38 kDa. Found in a ring-shaped complex of 7 nm diameter with a 2 nm channel through the middle. Complete denaturation requires temperatures over 110 degrees Celsius.

Its subcellular location is the cell outer membrane. Its function is as follows. The most abundant protein of the outer membrane, it forms a pore through it. In Ignicoccus hospitalis (strain KIN4/I / DSM 18386 / JCM 14125), this protein is Major outer membrane protein 1 (ihomp1).